A 506-amino-acid polypeptide reads, in one-letter code: Maturase K (506 aa).

This sequence belongs to the intron maturase 2 family. MatK subfamily.

It localises to the plastid. The protein resides in the chloroplast. Usually encoded in the trnK tRNA gene intron. Probably assists in splicing its own and other chloroplast group II introns. In Mimosa pudica (Sensitive plant), this protein is Maturase K.